Reading from the N-terminus, the 166-residue chain is Probable chemoreceptor glutamine deamidase CheD (166 aa).

It belongs to the CheD family.

It catalyses the reaction L-glutaminyl-[protein] + H2O = L-glutamyl-[protein] + NH4(+). In terms of biological role, probably deamidates glutamine residues to glutamate on methyl-accepting chemotaxis receptors (MCPs), playing an important role in chemotaxis. This chain is Probable chemoreceptor glutamine deamidase CheD, found in Clostridium acetobutylicum (strain ATCC 824 / DSM 792 / JCM 1419 / IAM 19013 / LMG 5710 / NBRC 13948 / NRRL B-527 / VKM B-1787 / 2291 / W).